We begin with the raw amino-acid sequence, 1263 residues long: Histone-lysine N-methyltransferase EHMT2 (1263 aa).

Disordered stretches follow at residues 1–314 (MRGL…LEEW) and 332–439 (DERV…EYME). Basic residues predominate over residues 26–39 (GRGRGGAHRGRGRP). Arginine 40 carries the asymmetric dimethylarginine modification. The span at 83-95 (LEKEPRGAAERVH) shows a compositional bias: basic and acidic residues. Phosphoserine is present on serine 97. A Phosphothreonine modification is found at threonine 101. Phosphoserine is present on residues serine 104 and serine 193. Lysine 239 is modified (N6,N6,N6-trimethyllysine; by EHMT2; alternate). Lysine 239 carries the N6,N6-dimethyllysine; by EHMT2; alternate modification. Positions 252 to 270 (PEKRPPEVQHFRMSDDMHL) are enriched in basic and acidic residues. Glycyl lysine isopeptide (Lys-Gly) (interchain with G-Cter in SUMO2) cross-links involve residues lysine 272 and lysine 282. Residues serine 285, serine 294, and serine 298 each carry the phosphoserine modification. 2 stretches are compositionally biased toward basic and acidic residues: residues 302 to 312 (ILEKGEPRPLE) and 332 to 343 (DERVDSDSKSEV). The segment covering 350 to 380 (LSEEEEEEEEEEEEEEEEEEEEEEEEEDEES) has biased composition (acidic residues). The segment covering 391 to 400 (GRRKAKKKWR) has biased composition (basic residues). A phosphoserine mark is found at serine 403, serine 465, and serine 466. Residue threonine 608 is modified to Phosphothreonine. Residues 621–647 (LAHDAPGRADTSQPSARMRGHGEPRRP) form a disordered region. A Glycyl lysine isopeptide (Lys-Gly) (interchain with G-Cter in SUMO2) cross-link involves residue lysine 687. ANK repeat units lie at residues 702–731 (FHPRQLYLSVKQGELQKVILMLLDNLDPNF), 737–766 (SKRTPLHAAAQKGSVEICHVLLQAGANINA), 770–799 (QQRTPLMEAVVNNHLEVARYMVQLGGCVYS), 803–833 (DGSTCLHHAAKIGNLEMVSLLLSTGQVDVNA), 837–866 (GGWTPIIWAAEHKHIDVIRMLLTRGADVTL), 870–899 (EENICLHWASFTGSAAIAEVLLNAQCDLHA), and 903–932 (HGDTPLHIAARESYHDCVLLFLSRGANPEL). The segment at 870–872 (EEN) is histone H3K9me binding. A Pre-SET domain is found at 1025–1088 (QHCTCVDDCS…SCKNRVVQSG (64 aa)). Residues cysteine 1027, cysteine 1029, cysteine 1033, cysteine 1038, cysteine 1040, cysteine 1070, cysteine 1074, cysteine 1076, and cysteine 1080 each coordinate Zn(2+). The SET domain occupies 1091 to 1208 (VRLQLYRTAK…TGEELGFDYG (118 aa)). S-adenosyl-L-methionine is bound by residues 1101-1103 (MGW), tyrosine 1138, and 1165-1166 (NH). The interaction with histone H3 stretch occupies residues 1127–1146 (DAEADVREDDSYLFDLDNKD). Cysteine 1168 contributes to the Zn(2+) binding site. The tract at residues 1207–1210 (YGDR) is interaction with histone H3. Positions 1217 to 1233 (KYFTCQCGSEKCKHSAE) constitute a Post-SET domain. Residues cysteine 1221, cysteine 1223, and cysteine 1228 each coordinate Zn(2+). A Phosphoserine modification is found at serine 1257. Threonine 1263 carries the post-translational modification Phosphothreonine.

It belongs to the class V-like SAM-binding methyltransferase superfamily. Histone-lysine methyltransferase family. Suvar3-9 subfamily. In terms of assembly, heterodimer; heterodimerizes with EHMT1/GLP. Interacts with GFI1B and WIZ. Part of the E2F6.com-1 complex in G0 phase composed of E2F6, MGA, MAX, TFDP1, CBX3, BAT8, EHMT1, RING1, RNF2, MBLR, L3MBTL2 and YAF2. Part of a complex composed of TRIM28, HDAC1, HDAC2 and EHMT2. Interacts with UHRF1. Interacts with CDYL. Interacts with REST only in the presence of CDYL. Part of a complex containing at least CDYL, REST, WIZ, SETB1, EHMT1 and EHMT2. Interacts with PRDM9 and CDYL; interaction only takes place when PRDM9 is bound to hotspot DNA. Interacts with SMYD5. In terms of processing, methylated at Lys-239; automethylated. In terms of tissue distribution, ubiquitous.

It is found in the nucleus. The protein resides in the chromosome. It carries out the reaction N(6)-methyl-L-lysyl(9)-[histone H3] + S-adenosyl-L-methionine = N(6),N(6)-dimethyl-L-lysyl(9)-[histone H3] + S-adenosyl-L-homocysteine + H(+). The catalysed reaction is L-lysyl(9)-[histone H3] + S-adenosyl-L-methionine = N(6)-methyl-L-lysyl(9)-[histone H3] + S-adenosyl-L-homocysteine + H(+). Histone methyltransferase that specifically mono- and dimethylates 'Lys-9' of histone H3 (H3K9me1 and H3K9me2, respectively) in euchromatin. H3K9me represents a specific tag for epigenetic transcriptional repression by recruiting HP1 proteins to methylated histones. Also mediates monomethylation of 'Lys-56' of histone H3 (H3K56me1) in G1 phase, leading to promote interaction between histone H3 and PCNA and regulating DNA replication. Also weakly methylates 'Lys-27' of histone H3 (H3K27me). Also required for DNA methylation, the histone methyltransferase activity is not required for DNA methylation, suggesting that these 2 activities function independently. Probably targeted to histone H3 by different DNA-binding proteins like E2F6, MGA, MAX and/or DP1. May also methylate histone H1. In addition to the histone methyltransferase activity, also methylates non-histone proteins: mediates dimethylation of 'Lys-373' of p53/TP53. Also methylates CDYL, WIZ, ACIN1, DNMT1, HDAC1, ERCC6, KLF12 and itself. This Mus musculus (Mouse) protein is Histone-lysine N-methyltransferase EHMT2 (Ehmt2).